The chain runs to 298 residues: Thymidylate synthase (298 aa).

DUMP is bound by residues arginine 25 and 159–160 (RR). The Nucleophile role is filled by cysteine 179. Residues 200–203 (RSVD), asparagine 211, and 241–243 (HLY) contribute to the dUMP site. Aspartate 203 provides a ligand contact to (6R)-5,10-methylene-5,6,7,8-tetrahydrofolate. Alanine 297 contacts (6R)-5,10-methylene-5,6,7,8-tetrahydrofolate.

It belongs to the thymidylate synthase family. Bacterial-type ThyA subfamily. Homodimer.

It localises to the cytoplasm. It catalyses the reaction dUMP + (6R)-5,10-methylene-5,6,7,8-tetrahydrofolate = 7,8-dihydrofolate + dTMP. Its pathway is pyrimidine metabolism; dTTP biosynthesis. Its function is as follows. Catalyzes the reductive methylation of 2'-deoxyuridine-5'-monophosphate (dUMP) to 2'-deoxythymidine-5'-monophosphate (dTMP) while utilizing 5,10-methylenetetrahydrofolate (mTHF) as the methyl donor and reductant in the reaction, yielding dihydrofolate (DHF) as a by-product. This enzymatic reaction provides an intracellular de novo source of dTMP, an essential precursor for DNA biosynthesis. This is Thymidylate synthase from Cereibacter sphaeroides (strain ATCC 17023 / DSM 158 / JCM 6121 / CCUG 31486 / LMG 2827 / NBRC 12203 / NCIMB 8253 / ATH 2.4.1.) (Rhodobacter sphaeroides).